The primary structure comprises 95 residues: Aspartyl/glutamyl-tRNA(Asn/Gln) amidotransferase subunit C (95 aa).

The protein belongs to the GatC family. In terms of assembly, heterotrimer of A, B and C subunits.

The enzyme catalyses L-glutamyl-tRNA(Gln) + L-glutamine + ATP + H2O = L-glutaminyl-tRNA(Gln) + L-glutamate + ADP + phosphate + H(+). The catalysed reaction is L-aspartyl-tRNA(Asn) + L-glutamine + ATP + H2O = L-asparaginyl-tRNA(Asn) + L-glutamate + ADP + phosphate + 2 H(+). In terms of biological role, allows the formation of correctly charged Asn-tRNA(Asn) or Gln-tRNA(Gln) through the transamidation of misacylated Asp-tRNA(Asn) or Glu-tRNA(Gln) in organisms which lack either or both of asparaginyl-tRNA or glutaminyl-tRNA synthetases. The reaction takes place in the presence of glutamine and ATP through an activated phospho-Asp-tRNA(Asn) or phospho-Glu-tRNA(Gln). In Rhizobium etli (strain ATCC 51251 / DSM 11541 / JCM 21823 / NBRC 15573 / CFN 42), this protein is Aspartyl/glutamyl-tRNA(Asn/Gln) amidotransferase subunit C.